A 640-amino-acid chain; its full sequence is 1-deoxy-D-xylulose-5-phosphate synthase (640 aa).

Residues histidine 79 and 120-122 (GHS) contribute to the thiamine diphosphate site. Residue aspartate 151 participates in Mg(2+) binding. Thiamine diphosphate-binding positions include 152-153 (GS), asparagine 180, tyrosine 290, and glutamate 372. Position 180 (asparagine 180) interacts with Mg(2+).

It belongs to the transketolase family. DXPS subfamily. As to quaternary structure, homodimer. The cofactor is Mg(2+). Thiamine diphosphate serves as cofactor.

It catalyses the reaction D-glyceraldehyde 3-phosphate + pyruvate + H(+) = 1-deoxy-D-xylulose 5-phosphate + CO2. The protein operates within metabolic intermediate biosynthesis; 1-deoxy-D-xylulose 5-phosphate biosynthesis; 1-deoxy-D-xylulose 5-phosphate from D-glyceraldehyde 3-phosphate and pyruvate: step 1/1. Its function is as follows. Catalyzes the acyloin condensation reaction between C atoms 2 and 3 of pyruvate and glyceraldehyde 3-phosphate to yield 1-deoxy-D-xylulose-5-phosphate (DXP). The chain is 1-deoxy-D-xylulose-5-phosphate synthase from Rhodopseudomonas palustris (strain BisA53).